We begin with the raw amino-acid sequence, 183 residues long: Large ribosomal subunit protein uL6 (183 aa).

It belongs to the universal ribosomal protein uL6 family. Part of the 50S ribosomal subunit.

This protein binds to the 23S rRNA, and is important in its secondary structure. It is located near the subunit interface in the base of the L7/L12 stalk, and near the tRNA binding site of the peptidyltransferase center. This chain is Large ribosomal subunit protein uL6, found in Chlamydia pneumoniae (Chlamydophila pneumoniae).